The following is a 591-amino-acid chain: A-type ATP synthase subunit A (591 aa).

ATP is bound at residue 233–240 (GPFGSGKT).

The protein belongs to the ATPase alpha/beta chains family. Has multiple subunits with at least A(3), B(3), C, D, E, F, H, I and proteolipid K(x).

Its subcellular location is the cell membrane. It catalyses the reaction ATP + H2O + 4 H(+)(in) = ADP + phosphate + 5 H(+)(out). Functionally, component of the A-type ATP synthase that produces ATP from ADP in the presence of a proton gradient across the membrane. The A chain is the catalytic subunit. The protein is A-type ATP synthase subunit A of Metallosphaera sedula (strain ATCC 51363 / DSM 5348 / JCM 9185 / NBRC 15509 / TH2).